The following is a 353-amino-acid chain: Heat-inducible transcription repressor HrcA (353 aa).

This sequence belongs to the HrcA family.

Functionally, negative regulator of class I heat shock genes (grpE-dnaK-dnaJ and groELS operons). Prevents heat-shock induction of these operons. In Anaeromyxobacter dehalogenans (strain 2CP-1 / ATCC BAA-258), this protein is Heat-inducible transcription repressor HrcA.